An 842-amino-acid polypeptide reads, in one-letter code: Glycogen phosphorylase, muscle form (842 aa).

At Ser-2 the chain carries N-acetylserine. A Phosphoserine; by PHK; in form phosphorylase A modification is found at Ser-15. Positions 43 and 76 each coordinate AMP. A phosphotyrosine mark is found at Tyr-204 and Tyr-227. 310–319 (RRFKSSKFGC) lines the AMP pocket. Phosphoserine is present on Ser-430. A Phosphotyrosine modification is found at Tyr-473. At Lys-681 the chain carries N6-(pyridoxal phosphate)lysine. Ser-747 and Ser-748 each carry phosphoserine.

It belongs to the glycogen phosphorylase family. Homodimer. Homotetramer; to form the enzymatically active phosphorylase A. Pyridoxal 5'-phosphate serves as cofactor. Post-translationally, phosphorylation of Ser-15 converts phosphorylase B (unphosphorylated) to phosphorylase A.

It carries out the reaction [(1-&gt;4)-alpha-D-glucosyl](n) + phosphate = [(1-&gt;4)-alpha-D-glucosyl](n-1) + alpha-D-glucose 1-phosphate. Allosterically regulated through the non-covalent binding of metabolites, being activated by AMP and inhibited by ATP, ADP, and glucose-6-phosphate. The activity is also controlled by post-translational modifications including phosphorylation. Functionally, allosteric enzyme that catalyzes the rate-limiting step in glycogen catabolism, the phosphorolytic cleavage of glycogen to produce glucose-1-phosphate, and plays a central role in maintaining cellular and organismal glucose homeostasis. This chain is Glycogen phosphorylase, muscle form, found in Bos taurus (Bovine).